The primary structure comprises 1976 residues: Myosin-10 (1976 aa).

Position 18 is an omega-N-methylarginine (Arg18). Residues 31–81 (TAKKLVWIPSERHGFEAASIKEERGDEVMVELAENGKKAMVNKDDIQKMNP) enclose the Myosin N-terminal SH3-like domain. One can recognise a Myosin motor domain in the interval 85–783 (SKVEDMAELT…VLAHLEEERD (699 aa)). An ATP-binding site is contributed by 178–185 (GESGAGKT). An N6-acetyllysine modification is found at Lys442. Positions 661-683 (LTKLMATLRNTNPNFVRCIIPNH) are actin-binding. An IQ domain is found at 786–815 (ITDIIIFFQAVCRGYLARKAFAKKQQQLSA). A coiled-coil region spans residues 845-1976 (LQVTRQEEEL…VNETQPPQSE (1132 aa)). The segment at 1125-1175 (EDFESEKASRNKAEKQKRDLSEELEALKTELEDTLDTTAAQQELRTKREQE) is disordered. Positions 1129–1155 (SEKASRNKAEKQKRDLSEELEALKTEL) are enriched in basic and acidic residues. Ser1145 carries the post-translational modification Phosphoserine. Residues Lys1241, Lys1301, and Lys1645 each carry the N6-acetyllysine modification. 2 disordered regions span residues 1697-1718 (ASSE…DEIA) and 1874-1976 (KANA…PQSE). Residues 1698–1708 (SSERARRHAEQ) are compositionally biased toward basic and acidic residues. Arg1930 bears the Omega-N-methylarginine mark. Phosphoserine occurs at positions 1935, 1937, 1938, and 1939. Arg1940 carries the omega-N-methylarginine modification. A phosphoserine mark is found at Ser1952 and Ser1956. Thr1960 is modified (phosphothreonine). Polar residues predominate over residues 1967 to 1976 (VNETQPPQSE). Ser1975 is modified (phosphoserine).

It belongs to the TRAFAC class myosin-kinesin ATPase superfamily. Myosin family. As to quaternary structure, myosin is a hexameric protein that consists of 2 heavy chain subunits (MHC), 2 alkali light chain subunits (MLC) and 2 regulatory light chain subunits (MLC-2). Interacts with PLEKHG6. Interacts with ECPAS. Interacts with KIF26B. Interacts with LARP6. Interacts with MCC. Interacts with CFAP95. Phosphorylated by ABL2.

Its subcellular location is the cell projection. It localises to the lamellipodium. Involved with LARP6 in the stabilization of type I collagen mRNAs for CO1A1 and CO1A2. During cell spreading, plays an important role in cytoskeleton reorganization, focal contacts formation (in the central part but not the margins of spreading cells), and lamellipodial extension; this function is mechanically antagonized by MYH9. Cellular myosin that appears to play a role in cytokinesis, cell shape, and specialized functions such as secretion and capping. The sequence is that of Myosin-10 (Myh10) from Rattus norvegicus (Rat).